The chain runs to 409 residues: DNA polymerase IV 2 (409 aa).

The UmuC domain maps to isoleucine 5–glycine 190. Mg(2+) is bound by residues aspartate 9 and aspartate 105. Glutamate 106 is a catalytic residue.

It belongs to the DNA polymerase type-Y family. As to quaternary structure, monomer. It depends on Mg(2+) as a cofactor.

The protein resides in the cytoplasm. The enzyme catalyses DNA(n) + a 2'-deoxyribonucleoside 5'-triphosphate = DNA(n+1) + diphosphate. In terms of biological role, poorly processive, error-prone DNA polymerase involved in untargeted mutagenesis. Copies undamaged DNA at stalled replication forks, which arise in vivo from mismatched or misaligned primer ends. These misaligned primers can be extended by PolIV. Exhibits no 3'-5' exonuclease (proofreading) activity. May be involved in translesional synthesis, in conjunction with the beta clamp from PolIII. The polypeptide is DNA polymerase IV 2 (dinB2) (Halalkalibacterium halodurans (strain ATCC BAA-125 / DSM 18197 / FERM 7344 / JCM 9153 / C-125) (Bacillus halodurans)).